The sequence spans 268 residues: Very-long-chain aldehyde decarbonylase GL1-8 (268 aa).

The next 4 helical transmembrane spans lie at 26–46 (IGTF…SLLF), 70–90 (CVVR…ILSY), 107–127 (WTVV…IFYW), and 164–184 (ILFL…HLFT). The 136-residue stretch at 114–249 (VLFFFVLEDF…FIYMDWLFGT (136 aa)) folds into the Fatty acid hydroxylase domain.

This sequence belongs to the sterol desaturase family. Homodimer.

It localises to the endoplasmic reticulum membrane. The catalysed reaction is a long-chain fatty aldehyde + 2 NADPH + O2 + H(+) = a long-chain alkane + formate + 2 NADP(+) + H2O. Functionally, aldehyde decarbonylase involved in the conversion of aldehydes to alkanes. Core component of a very-long-chain alkane synthesis complex. This chain is Very-long-chain aldehyde decarbonylase GL1-8, found in Oryza sativa subsp. indica (Rice).